The following is a 467-amino-acid chain: Cysteine protease ATG4a (467 aa).

The segment at 1–35 (MKALCDRFVPQQCSSSSKSDTHDKSPLVSDSGPSD) is disordered. The active-site Nucleophile is the Cys170. Active-site residues include Asp364 and His366. The disordered stretch occupies residues 448–467 (NYGFADDDSEDEREDDWQML). A compositionally biased stretch (acidic residues) spans 452–467 (ADDDSEDEREDDWQML).

Belongs to the peptidase C54 family. As to quaternary structure, interacts with ATG8. Constitutively expressed.

Its subcellular location is the cytoplasm. The enzyme catalyses [protein]-C-terminal L-amino acid-glycyl-phosphatidylethanolamide + H2O = [protein]-C-terminal L-amino acid-glycine + a 1,2-diacyl-sn-glycero-3-phosphoethanolamine. Functionally, cysteine protease that plays a key role in autophagy by mediating both proteolytic activation and delipidation of ATG8 family proteins. The protease activity is required for proteolytic activation of ATG8 family proteins: cleaves the C-terminal amino acid of ATG8 proteins to reveal a C-terminal glycine. Exposure of the glycine at the C-terminus is essential for ATG8 proteins conjugation to phosphatidylethanolamine (PE) and insertion to membranes, which is necessary for autophagy. In addition to the protease activity, also mediates delipidation of PE-conjugated ATG8 proteins. This Arabidopsis thaliana (Mouse-ear cress) protein is Cysteine protease ATG4a.